The following is a 582-amino-acid chain: MEETKYSSQQEIEGACGSDASLNARGSNDSPMGLSLYLCLASLTLVLFITALDILIVGTIIDVVAEQFGNYSKTGWLVTGYSLPNAILSLIWGRFASIIGFQHSLILAILIFEAGSLIAALASSMNMLIFGRVVAGVGGSGLQTLCFVIGCTMVGERSRPLVISILSCAFAVAAIVGPIIGGAFTTHVTWRWCFYINLPIGGLAIIMFLLTYKAENKGILQQIKDAIGTISSFTFSKFRHQVNFKRLMNGIIFKFDFFGFALCSAGLVLFLLGLTFGGNKYSWNSGQVITYLVLGVLLFIFSLVYDFFLFDKFNPEPDNISYRPLLLRRLVAKPAIIIVNMVTFLLCTGYNGQMIYSVQFFQLIFASSAWKAGLHLIPIVITNVIAAIASGVITKKLGLVKPLLIFGGVLGVIGAGLMTLMTNTSTKSTQIGVLLLPGFSLGFALQASLMSAQLQITKDRPEAAMDFIEVTAFNTFMKSLGTTLGGVLSTTVFSASFHNKVSRAHLEPYEGKTVDDMILYRLQNYDGSHSTIGNILSDSIKNVFWMDLGFYALGFLFCSFSSNKKLIIPKKDDTPEDNLEDK.

Residues 1–44 (MEETKYSSQQEIEGACGSDASLNARGSNDSPMGLSLYLCLASLT) lie on the Cytoplasmic side of the membrane. Residues 45 to 65 (LVLFITALDILIVGTIIDVVA) form a helical membrane-spanning segment. The Vacuolar segment spans residues 66-80 (EQFGNYSKTGWLVTG). N70 carries N-linked (GlcNAc...) asparagine glycosylation. The helical transmembrane segment at 81-101 (YSLPNAILSLIWGRFASIIGF) threads the bilayer. The Cytoplasmic portion of the chain corresponds to 102 to 104 (QHS). The chain crosses the membrane as a helical span at residues 105 to 125 (LILAILIFEAGSLIAALASSM). Topologically, residues 126–132 (NMLIFGR) are vacuolar. Residues 133 to 153 (VVAGVGGSGLQTLCFVIGCTM) form a helical membrane-spanning segment. The Cytoplasmic segment spans residues 154–160 (VGERSRP). The chain crosses the membrane as a helical span at residues 161–181 (LVISILSCAFAVAAIVGPIIG). The Vacuolar segment spans residues 182 to 191 (GAFTTHVTWR). The helical transmembrane segment at 192 to 212 (WCFYINLPIGGLAIIMFLLTY) threads the bilayer. Residues 213–256 (KAENKGILQQIKDAIGTISSFTFSKFRHQVNFKRLMNGIIFKFD) lie on the Cytoplasmic side of the membrane. Residues 257–277 (FFGFALCSAGLVLFLLGLTFG) form a helical membrane-spanning segment. Over 278–287 (GNKYSWNSGQ) the chain is Vacuolar. The chain crosses the membrane as a helical span at residues 288 to 308 (VITYLVLGVLLFIFSLVYDFF). Residues 309-329 (LFDKFNPEPDNISYRPLLLRR) lie on the Cytoplasmic side of the membrane. A helical transmembrane segment spans residues 330-350 (LVAKPAIIIVNMVTFLLCTGY). At 351 to 372 (NGQMIYSVQFFQLIFASSAWKA) the chain is on the vacuolar side. A helical membrane pass occupies residues 373–393 (GLHLIPIVITNVIAAIASGVI). Residues 394–401 (TKKLGLVK) are Cytoplasmic-facing. The helical transmembrane segment at 402–422 (PLLIFGGVLGVIGAGLMTLMT) threads the bilayer. N-linked (GlcNAc...) asparagine glycosylation occurs at N423. At 423–430 (NTSTKSTQ) the chain is on the vacuolar side. The chain crosses the membrane as a helical span at residues 431–451 (IGVLLLPGFSLGFALQASLMS). Residues 452-469 (AQLQITKDRPEAAMDFIE) lie on the Cytoplasmic side of the membrane. The helical transmembrane segment at 470 to 492 (VTAFNTFMKSLGTTLGGVLSTTV) threads the bilayer. Over 493–539 (FSASFHNKVSRAHLEPYEGKTVDDMILYRLQNYDGSHSTIGNILSDS) the chain is Vacuolar. A helical membrane pass occupies residues 540–560 (IKNVFWMDLGFYALGFLFCSF). Residues 561 to 582 (SSNKKLIIPKKDDTPEDNLEDK) lie on the Cytoplasmic side of the membrane.

This sequence belongs to the major facilitator superfamily.

The protein resides in the vacuole membrane. Its function is as follows. Transporter required for vacuolar uptake of basic amino acids. The polypeptide is Vacuolar basic amino acid transporter 5 (VBA5) (Saccharomyces cerevisiae (strain ATCC 204508 / S288c) (Baker's yeast)).